The following is a 148-amino-acid chain: Lysozyme-like protein 6 (148 aa).

A signal peptide spans 1–19; the sequence is MTKALLIYLVSSFLALNQA. The 129-residue stretch at 20 to 148 folds into the C-type lysozyme domain; sequence SLISRCDLAQ…FYWLTGCRLR (129 aa). 4 disulfide bridges follow: C25–C145, C49–C133, C83–C98, and C94–C112. Active-site residues include E54 and D71.

It belongs to the glycosyl hydrolase 22 family. As to quaternary structure, monomer. As to expression, expressed in testis, epididymis and spermatozoa (at protein level). Expressed in late-stage spermatocytes and round spermatids.

The protein resides in the secreted. It is found in the cell surface. Its subcellular location is the cell projection. The protein localises to the cilium. It localises to the flagellum. It catalyses the reaction Hydrolysis of (1-&gt;4)-beta-linkages between N-acetylmuramic acid and N-acetyl-D-glucosamine residues in a peptidoglycan and between N-acetyl-D-glucosamine residues in chitodextrins.. Functionally, may be involved sperm-egg plasma membrane adhesion and fusion during fertilization. Exhibits bacteriolytic activity in vitro against Micrococcus luteus and Staphylococcus aureus. Shows weak bacteriolytic activity against Gram-positive bacteria at physiological pH. Bacteriolytic activity is pH-dependent, with a maximum at around pH 5.6. This Homo sapiens (Human) protein is Lysozyme-like protein 6 (LYZL6).